The primary structure comprises 521 residues: Bifunctional purine biosynthesis protein PurH (521 aa).

The region spanning 1–145 (MIKQALISVS…KNHKDVIVIC (145 aa)) is the MGS-like domain.

This sequence belongs to the PurH family.

The catalysed reaction is (6R)-10-formyltetrahydrofolate + 5-amino-1-(5-phospho-beta-D-ribosyl)imidazole-4-carboxamide = 5-formamido-1-(5-phospho-D-ribosyl)imidazole-4-carboxamide + (6S)-5,6,7,8-tetrahydrofolate. The enzyme catalyses IMP + H2O = 5-formamido-1-(5-phospho-D-ribosyl)imidazole-4-carboxamide. It participates in purine metabolism; IMP biosynthesis via de novo pathway; 5-formamido-1-(5-phospho-D-ribosyl)imidazole-4-carboxamide from 5-amino-1-(5-phospho-D-ribosyl)imidazole-4-carboxamide (10-formyl THF route): step 1/1. The protein operates within purine metabolism; IMP biosynthesis via de novo pathway; IMP from 5-formamido-1-(5-phospho-D-ribosyl)imidazole-4-carboxamide: step 1/1. The sequence is that of Bifunctional purine biosynthesis protein PurH from Herminiimonas arsenicoxydans.